A 294-amino-acid polypeptide reads, in one-letter code: MRFVIVTGLSGAGKTEATRSLEDLGYFCVDNLPPKLIPKFAEACVQSEGKIDKIALVIDIRGGIFFDDLFESIEYLKANDFNYEILFLEASDEVLVKRFKETRRSHPLSPDGRIITGISEERMRLRELKDRADNIIDTSNYPIRNLREKINLLYGDGKPVEQNLSITVLSFGFKYGIPSDSDLVFDVRFIPNPFYIPELKPFSGEDEPVKNYVLAQEETKGFLSRLSDMAEFLIPNYIKEGKRQLIISIGCTGGRHRSVAIANALYKDLLCKNFHVTLEHRDINEDINRGDRKL.

Residue 8 to 15 coordinates ATP; that stretch reads GLSGAGKT. 59–62 is a GTP binding site; that stretch reads DIRG.

This sequence belongs to the RapZ-like family.

Functionally, displays ATPase and GTPase activities. In Clostridium perfringens (strain ATCC 13124 / DSM 756 / JCM 1290 / NCIMB 6125 / NCTC 8237 / Type A), this protein is Nucleotide-binding protein CPF_0343.